The chain runs to 305 residues: Alpha-N-acetylgalactosaminide alpha-2,6-sialyltransferase 3 (305 aa).

At 1–8 (MACILKRK) the chain is on the cytoplasmic side. Residues 9–28 (SVIAVSFIAAFLFLLVVRLV) traverse the membrane as a helical; Signal-anchor for type II membrane protein segment. Residues 29–305 (NEVNFPLLLN…IFTHPNWTLS (277 aa)) are Lumenal-facing. A disulfide bond links Cys80 and Cys229. N-linked (GlcNAc...) asparagine glycosylation is found at Asn148, Asn239, and Asn301.

Belongs to the glycosyltransferase 29 family. In terms of tissue distribution, expressed in brain and kidney. Observed in the epithelium of the proximal tubules, marginal expression was also found in the distal tubules and collecting tubules.

Its subcellular location is the golgi apparatus membrane. It catalyses the reaction an alpha-Neu5Ac-(2-&gt;3)-beta-D-Gal-(1-&gt;3)-D-GlcNAc derivative + CMP-N-acetyl-beta-neuraminate = an alpha-Neu5Ac-(2-&gt;3)-beta-D-Gal-(1-&gt;3)-[alpha-Neu5Ac-(2-&gt;6)]-D-GlcNAc derivative + CMP + H(+). It carries out the reaction a ganglioside GM1b (d18:1(4E)) + CMP-N-acetyl-beta-neuraminate = a ganglioside GD1alpha (d18:1(4E)) + CMP + H(+). The enzyme catalyses a globoside MSGG + CMP-N-acetyl-beta-neuraminate = a globoside DSGG + CMP + H(+). The catalysed reaction is 3-O-[alpha-Neu5Ac-(2-&gt;3)-beta-D-Gal-(1-&gt;3)-alpha-D-GalNAc]-L-Ser-[protein] + CMP-N-acetyl-beta-neuraminate = a 3-O-{alpha-Neu5Ac-(2-&gt;3)-beta-D-Gal-(1-&gt;3)-[alpha-Neu5Ac-(2-&gt;6)]-alpha-D-GalNAc}-L-seryl-[protein] + CMP + H(+). It catalyses the reaction 3-O-[alpha-Neu5Ac-(2-&gt;3)-beta-D-Gal-(1-&gt;3)-alpha-D-GalNAc]-L-Thr-[protein] + CMP-N-acetyl-beta-neuraminate = a 3-O-{alpha-Neu5Ac-(2-&gt;3)-beta-D-Gal-(1-&gt;3)-[alpha-Neu5Ac-(2-&gt;6)]-alpha-D-GalNAc}-L-threonyl-[protein] + CMP + H(+). The protein operates within protein modification; protein glycosylation. It participates in glycolipid biosynthesis. In terms of biological role, transfers the sialyl group (N-acetyl-alpha-neuraminyl or NeuAc) from CMP-NeuAc to the GalNAc residue on the NeuAc-alpha-2,3-Gal-beta-1,3-GalNAc sequence of glycoproteins and glycolipids forming an alpha-2,6-linkage. Produces branched type disialyl structures by transfer of a sialyl group onto a GalNAc residue inside the backbone core chains. ST6GalNAcIII prefers glycolipids to glycoproteins, predominantly catalyzing the biosynthesis of ganglioside GD1alpha from GM1b. GD1alpha is a critical molecule in the communication and interaction between neuronal cells and their supportive cells, particularly in brain tissues, and functions as an adhesion molecule in the process of metastasis. Sialylation of glycoproteins or glycosphingolipids is very important in tumor development, neuronal development, nerve repair, immunological processes and regulation of hormone sensitivity. The polypeptide is Alpha-N-acetylgalactosaminide alpha-2,6-sialyltransferase 3 (ST6GALNAC3) (Homo sapiens (Human)).